A 285-amino-acid chain; its full sequence is Bis(5'-nucleosyl)-tetraphosphatase, symmetrical (285 aa).

It belongs to the Ap4A hydrolase family.

The enzyme catalyses P(1),P(4)-bis(5'-adenosyl) tetraphosphate + H2O = 2 ADP + 2 H(+). Hydrolyzes diadenosine 5',5'''-P1,P4-tetraphosphate to yield ADP. The protein is Bis(5'-nucleosyl)-tetraphosphatase, symmetrical of Colwellia psychrerythraea (strain 34H / ATCC BAA-681) (Vibrio psychroerythus).